A 382-amino-acid chain; its full sequence is Na(+)/H(+) antiporter NhaA (382 aa).

10 helical membrane passes run 5–25, 42–62, 88–108, 116–136, 145–165, 169–189, 261–281, 282–302, 327–347, and 353–373; these read INLL…ALAW, FGGV…FFGI, LATL…NAVI, GWGI…RLVF, FLLL…AVFY, VHPT…AAYI, IVVD…RFSS, VGTA…AGIL, TGLV…VAFV, and GAAK…VALG.

The protein belongs to the NhaA Na(+)/H(+) (TC 2.A.33) antiporter family.

It localises to the cell inner membrane. The enzyme catalyses Na(+)(in) + 2 H(+)(out) = Na(+)(out) + 2 H(+)(in). Its function is as follows. Na(+)/H(+) antiporter that extrudes sodium in exchange for external protons. This Geobacter metallireducens (strain ATCC 53774 / DSM 7210 / GS-15) protein is Na(+)/H(+) antiporter NhaA.